Consider the following 423-residue polypeptide: Glutamate-1-semialdehyde 2,1-aminomutase (423 aa).

At K259 the chain carries N6-(pyridoxal phosphate)lysine.

Belongs to the class-III pyridoxal-phosphate-dependent aminotransferase family. HemL subfamily. It depends on pyridoxal 5'-phosphate as a cofactor.

The protein localises to the cytoplasm. It carries out the reaction (S)-4-amino-5-oxopentanoate = 5-aminolevulinate. The protein operates within porphyrin-containing compound metabolism; protoporphyrin-IX biosynthesis; 5-aminolevulinate from L-glutamyl-tRNA(Glu): step 2/2. This chain is Glutamate-1-semialdehyde 2,1-aminomutase, found in Methanobrevibacter smithii (strain ATCC 35061 / DSM 861 / OCM 144 / PS).